Here is a 63-residue protein sequence, read N- to C-terminus: Large ribosomal subunit protein bL35 (63 aa).

A disordered region spans residues 26–50 (GSGMRHNLEHKSARKRRALKRDDVL).

The protein belongs to the bacterial ribosomal protein bL35 family.

This chain is Large ribosomal subunit protein bL35, found in Bifidobacterium animalis subsp. lactis (strain AD011).